Reading from the N-terminus, the 827-residue chain is MSQSSPSNAETDEDLSTTSSSSSFVPIEQHQIQDAIQVIDENKEFNKNILPYVVKTTPISSVGNNYHIISVFGSQSTGKSTLLNRLFNTNFDVMDESRRQQTTKGIWMAHSPQVSTTKQMDTHQENIFVMDVEGTDGRERGEDQDFERKAALFALATSEILIVNIWETQIGLYQGANMGLLKTVFEVNLTLFGKSKLEKNDHKVLLLIVIRDHVGLTPKENLSSTITQDLLKIWESLNKPAELAHLQFEDFFDTDFHTLRHKVLQPKEFLEDVNELGDRLVVKKDLFRPNYHHNIPIDGWTMYAENCWQQIDSNKDLDLPTQQILVAKFKCDEISASVYEEFHQKFKAISSANTPGISTLDYQDLGLLLVDLRSDTLENYDLSASRYTKSVYEQRKDLLKEKLNEKFREFFDAHIKHLSEKSVKEFETNIVGLKGKNFDKEATRLTRETTDYFINSAILLSLENELDYDVHVSNLQDQLTKLIQQQQLVELKNIVNKSIKKLSSGLTKAVSFELADPTETSWNNILSKFKEFVLDFLSKNELEEEAGTYDFGLGTNRAQNKEAVETFKFKSWNAFYEIIHKIISKDNLLTLLKDRFDDKFRYDENGLPRMYQNTVELETNFGISKSFALRIVPLLTIAKLNDNSEILPDYDIFDSKLRAKYLGLVENEHDSEDEEDEEDRCFAEIISESEKAEVLNKFKKETDARFIETKRSIVQHVTQIPYYIYLVIMVLGWNEFMAIVRNPLFFSLVLVFGAGLYILYSMNLLKPAMVVVQRLIDEIIAMAKEKMREFLIDDHPTQAHNLQKISASNREKVEEEKVVETIEMQDL.

Residues 1 to 26 are disordered; it reads MSQSSPSNAETDEDLSTTSSSSSFVP. The Cytoplasmic portion of the chain corresponds to 1–719; that stretch reads MSQSSPSNAE…KRSIVQHVTQ (719 aa). The GB1/RHD3-type G domain maps to 63 to 291; the sequence is GNNYHIISVF…VKKDLFRPNY (229 aa). 73–80 serves as a coordination point for GTP; sequence GSQSTGKS. 2 coiled-coil regions span residues 389–409 and 472–492; these read KSVYEQRKDLLKEKLNEKFRE and VSNLQDQLTKLIQQQQLVELK. Residues 720 to 740 form a helical membrane-spanning segment; that stretch reads IPYYIYLVIMVLGWNEFMAIV. Residues 741-743 are Lumenal-facing; sequence RNP. Residues 744-764 form a helical membrane-spanning segment; the sequence is LFFSLVLVFGAGLYILYSMNL. Over 765–827 the chain is Cytoplasmic; it reads LKPAMVVVQR…VVETIEMQDL (63 aa). Positions 803–823 form a coiled coil; sequence QKISASNREKVEEEKVVETIE.

The protein belongs to the TRAFAC class dynamin-like GTPase superfamily. GB1/RHD3 GTPase family. RHD3 subfamily.

Its subcellular location is the endoplasmic reticulum membrane. Functionally, cooperates with the reticulon proteins and tubule-shaping DP1 family proteins to generate and maintain the structure of the tubular endoplasmic reticulum network. Has GTPase activity, which is required for its function in ER organization. This is Protein SEY1 from Scheffersomyces stipitis (strain ATCC 58785 / CBS 6054 / NBRC 10063 / NRRL Y-11545) (Yeast).